We begin with the raw amino-acid sequence, 260 residues long: Small ribosomal subunit protein uS2 (260 aa).

Belongs to the universal ribosomal protein uS2 family.

The chain is Small ribosomal subunit protein uS2 from Roseobacter denitrificans (strain ATCC 33942 / OCh 114) (Erythrobacter sp. (strain OCh 114)).